The primary structure comprises 448 residues: MGEAAYVTVSALTKYIKRKFDVDPHLENIWIKGELSNVKIHTRGHIYFTLKDENARMQSVMFARQSERLPFKPENGMKVLVRGGISVYEPSGNYQLYAKEMQPDGVGALYLAYEELKKKLAGEGLFDDRYKKQIPAFPATIGVVTSPTGAAVRDVITTLKRRYPLVKVIVLPALVQGENASRSIVTRIEEANEKEICDVLIVGRGGGSIEELWAFNEEIVARAIFASNIPIISAVGHETDFTISDFVADIRAATPTGAAEIAVPHTTDLIERTKTAEVRMTRAMQQHLGQKKERIQTLQSSYAFRFPKRLYAQKEQQFDLAYQQFQAQLTALLDRKSRQLERETYRLEALHPHEQLKQARTRYQEQTNQLRKNMNIQMKQLHSQFQTVLGKLNALSPLQVMERGYSLAYKEDKLIKSVSQIEEQDRLEIKLKDGVLTCEVLEKRGEEK.

The protein belongs to the XseA family. As to quaternary structure, heterooligomer composed of large and small subunits.

Its subcellular location is the cytoplasm. It localises to the nucleoid. It carries out the reaction Exonucleolytic cleavage in either 5'- to 3'- or 3'- to 5'-direction to yield nucleoside 5'-phosphates.. In terms of biological role, bidirectionally degrades single-stranded DNA into large acid-insoluble oligonucleotides, which are then degraded further into small acid-soluble oligonucleotides. This is Exodeoxyribonuclease 7 large subunit from Bacillus subtilis (strain 168).